The chain runs to 382 residues: Dual-specificity RNA methyltransferase RlmN (382 aa).

The active-site Proton acceptor is glutamate 113. The 240-residue stretch at 119–358 folds into the Radical SAM core domain; that stretch reads EINRATLCIS…TTIRKQRGID (240 aa). A disulfide bridge links cysteine 126 with cysteine 363. [4Fe-4S] cluster contacts are provided by cysteine 133, cysteine 137, and cysteine 140. Residues 187–188, serine 219, 241–243, and asparagine 320 each bind S-adenosyl-L-methionine; these read GE and SLH. The S-methylcysteine intermediate role is filled by cysteine 363.

This sequence belongs to the radical SAM superfamily. RlmN family. [4Fe-4S] cluster is required as a cofactor.

The protein resides in the cytoplasm. It catalyses the reaction adenosine(2503) in 23S rRNA + 2 reduced [2Fe-2S]-[ferredoxin] + 2 S-adenosyl-L-methionine = 2-methyladenosine(2503) in 23S rRNA + 5'-deoxyadenosine + L-methionine + 2 oxidized [2Fe-2S]-[ferredoxin] + S-adenosyl-L-homocysteine. The catalysed reaction is adenosine(37) in tRNA + 2 reduced [2Fe-2S]-[ferredoxin] + 2 S-adenosyl-L-methionine = 2-methyladenosine(37) in tRNA + 5'-deoxyadenosine + L-methionine + 2 oxidized [2Fe-2S]-[ferredoxin] + S-adenosyl-L-homocysteine. Specifically methylates position 2 of adenine 2503 in 23S rRNA and position 2 of adenine 37 in tRNAs. m2A2503 modification seems to play a crucial role in the proofreading step occurring at the peptidyl transferase center and thus would serve to optimize ribosomal fidelity. In Wigglesworthia glossinidia brevipalpis, this protein is Dual-specificity RNA methyltransferase RlmN.